The primary structure comprises 402 residues: Uroporphyrinogen decarboxylase 1, chloroplastic (402 aa).

A chloroplast-targeting transit peptide spans Met-1 to Arg-50. Substrate-binding positions include Arg-67–Arg-71, Phe-86, Ser-116, Asp-117, Tyr-193, Ser-248, and His-363.

This sequence belongs to the uroporphyrinogen decarboxylase family. As to quaternary structure, homodimer.

Its subcellular location is the plastid. It is found in the chloroplast. The enzyme catalyses uroporphyrinogen III + 4 H(+) = coproporphyrinogen III + 4 CO2. Its pathway is porphyrin-containing compound metabolism; protoporphyrin-IX biosynthesis; coproporphyrinogen-III from 5-aminolevulinate: step 4/4. Functionally, catalyzes the decarboxylation of four acetate groups of uroporphyrinogen-III to yield coproporphyrinogen-III. This Oryza sativa subsp. japonica (Rice) protein is Uroporphyrinogen decarboxylase 1, chloroplastic.